Reading from the N-terminus, the 1070-residue chain is Phosphatidylinositol 4,5-bisphosphate 3-kinase catalytic subunit beta isoform (1070 aa).

One can recognise a PI3K-ABD domain in the interval 26–115 (SDGSIPVDFL…LPVLKLVTRS (90 aa)). In terms of domain architecture, PI3K-RBD spans 194 to 285 (GGKLIVAVHF…RALPHFILVE (92 aa)). Ser-324 is subject to Phosphoserine. The 170-residue stretch at 327 to 496 (WENNNPFQIV…NATALHVKFP (170 aa)) folds into the C2 PI3K-type domain. A Nuclear localization signal motif is present at residues 410–418 (KVKTKKSTK). One can recognise a PIK helical domain in the interval 524–701 (ANVSSRGGKK…GVILEAYCRG (178 aa)). The 282-residue stretch at 772–1053 (YVEKCKYMDS…KFDEALRESW (282 aa)) folds into the PI3K/PI4K catalytic domain. The interval 778 to 784 (YMDSKMK) is G-loop. The segment at 916–924 (GIGDRHSDN) is catalytic loop. Residues 935–961 (HIDFGHILGNFKSKFGIKRERVPFILT) are activation loop. Ser-1070 is subject to Phosphoserine; by autocatalysis.

This sequence belongs to the PI3/PI4-kinase family. In terms of assembly, heterodimer of a catalytic subunit PIK3CB and a p85 regulatory subunit (PIK3R1, PIK3R2 or PIK3R3). Interaction with PIK3R2 is required for nuclear localization and nuclear export. Part of a complex with PIK3R1 and PTEN. Binding to PTEN may antagonize the lipid kinase activity under normal growth conditions. Part of a complex involved in autophagosome formation composed of PIK3C3 and PIK3R4. Interacts with BECN1, ATG14 and RAB5A. In terms of processing, autophosphorylation at Ser-1070 negatively regulates the phosphatidylinositol-4,5-bisphosphate 3-kinase activity. As to expression, expressed ubiquitously.

It is found in the cytoplasm. The protein resides in the nucleus. It catalyses the reaction a 1,2-diacyl-sn-glycero-3-phospho-(1D-myo-inositol-4,5-bisphosphate) + ATP = a 1,2-diacyl-sn-glycero-3-phospho-(1D-myo-inositol-3,4,5-trisphosphate) + ADP + H(+). The catalysed reaction is 1-octadecanoyl-2-(5Z,8Z,11Z,14Z)-eicosatetraenoyl-sn-glycero-3-phospho-1D-myo-inositol 4,5-bisphosphate + ATP = 1-octadecanoyl-2-(5Z,8Z,11Z,14Z-eicosatetraenoyl)-sn-glycero-3-phospho-(1D-myo-inositol 3,4,5-triphosphate) + ADP + H(+). It carries out the reaction L-seryl-[protein] + ATP = O-phospho-L-seryl-[protein] + ADP + H(+). Its pathway is phospholipid metabolism; phosphatidylinositol phosphate biosynthesis. Its function is as follows. Phosphoinositide-3-kinase (PI3K) phosphorylates phosphatidylinositol derivatives at position 3 of the inositol ring to produce 3-phosphoinositides. Uses ATP and PtdIns(4,5)P2 (phosphatidylinositol 4,5-bisphosphate) to generate phosphatidylinositol 3,4,5-trisphosphate (PIP3). PIP3 plays a key role by recruiting PH domain-containing proteins to the membrane, including AKT1 and PDPK1, activating signaling cascades involved in cell growth, survival, proliferation, motility and morphology. Involved in the activation of AKT1 upon stimulation by G-protein coupled receptors (GPCRs) ligands such as CXCL12, sphingosine 1-phosphate, and lysophosphatidic acid. May also act downstream receptor tyrosine kinases. Required in different signaling pathways for stable platelet adhesion and aggregation. Plays a role in platelet activation signaling triggered by GPCRs, alpha-IIb/beta-3 integrins (ITGA2B/ ITGB3) and ITAM (immunoreceptor tyrosine-based activation motif)-bearing receptors such as GP6. Regulates the strength of adhesion of ITGA2B/ ITGB3 activated receptors necessary for the cellular transmission of contractile forces. Required for platelet aggregation induced by F2 (thrombin) and thromboxane A2 (TXA2). Has a role in cell survival. May have a role in cell migration. Involved in the early stage of autophagosome formation. Modulates the intracellular level of PtdIns3P (phosphatidylinositol 3-phosphate) and activates PIK3C3 kinase activity. May act as a scaffold, independently of its lipid kinase activity to positively regulate autophagy. May have a role in insulin signaling as scaffolding protein in which the lipid kinase activity is not required. May have a kinase-independent function in regulating cell proliferation and in clathrin-mediated endocytosis. Mediator of oncogenic signal in cell lines lacking PTEN. The lipid kinase activity is necessary for its role in oncogenic transformation. Required for the growth of ERBB2 and RAS driven tumors. Also has a protein kinase activity showing autophosphorylation. The sequence is that of Phosphatidylinositol 4,5-bisphosphate 3-kinase catalytic subunit beta isoform (PIK3CB) from Homo sapiens (Human).